A 247-amino-acid polypeptide reads, in one-letter code: Homeobox protein BarH-like 1b (247 aa).

Disordered regions lie at residues 118-138 (RGKL…GRRS) and 197-247 (GGGL…SQEE). The homeobox DNA-binding region spans 135-194 (GRRSRTVFTELQLMGLEKRFEKQKYLSTPDRIDLAESLGLSQLQVKTWYQNRRMKWKKIV). Positions 223 to 234 (EQERARDAEKPP) are enriched in basic and acidic residues.

This sequence belongs to the BAR homeobox family. In terms of assembly, interacts with serum response factor (SRF). Expressed in smooth muscle cells of the upper digestive organs and their attached arteries and to craniofacial structures.

Its subcellular location is the nucleus. Functionally, transcription factor which is involved with the serum response factor (SRF) in the smooth muscle cell-specific transcription of the beta-tropomyosin gene in the upper digestive organs and their attached arteries. The chain is Homeobox protein BarH-like 1b (BARX1B) from Gallus gallus (Chicken).